The chain runs to 144 residues: Necrosis-inducing secreted protein 1 (144 aa).

Positions 1–19 are cleaved as a signal peptide; the sequence is MQFRASIAAAAGLFALANA. 3 N-linked (GlcNAc...) asparagine glycosylation sites follow: Asn88, Asn126, and Asn133. Residues 103–132 form a BAK1/SERK3-binding region; that stretch reads QYVVAAGLYSLYGASSSPTLSHYNVTVTVG.

Belongs to the NIS1 effector family.

The protein localises to the secreted. The protein resides in the host cytoplasm. Its function is as follows. Secreted effector that induces necrotic lesions in Nicotiana benthamiana. Interacts with the host receptor-like kinases (RLKs) BAK1/SERK3 and BKK1/SERK4, inhibits their kinase activity and suppresses INF1-induced pathogen-associated molecular pattern (PAMP)-triggered immunity (PTI) in N.benthamiana. Also interacts with the host receptor-like cytoplasmic kinase (RLCK) BIK1 and inhibits its kinase activity, thereby inhibiting PAMP-induced ROS generation. In PTI, phosphorylation relaying by RLKs and RLCKs is critical for the initiation of downstream signaling. In Colletotrichum higginsianum (strain IMI 349063) (Crucifer anthracnose fungus), this protein is Necrosis-inducing secreted protein 1.